The following is a 255-amino-acid chain: Ribonuclease HII (255 aa).

In terms of domain architecture, RNase H type-2 spans 70 to 255 (DLVAGIDEVG…FEPVPEFLIK (186 aa)). Residues D76, E77, and D168 each contribute to the a divalent metal cation site.

This sequence belongs to the RNase HII family. Mn(2+) serves as cofactor. Requires Mg(2+) as cofactor.

It localises to the cytoplasm. The catalysed reaction is Endonucleolytic cleavage to 5'-phosphomonoester.. Functionally, endonuclease that specifically degrades the RNA of RNA-DNA hybrids. This chain is Ribonuclease HII, found in Pediococcus pentosaceus (strain ATCC 25745 / CCUG 21536 / LMG 10740 / 183-1w).